The primary structure comprises 490 residues: Aspartyl/glutamyl-tRNA(Asn/Gln) amidotransferase subunit B (490 aa).

Belongs to the GatB/GatE family. GatB subfamily. Heterotrimer of A, B and C subunits.

The catalysed reaction is L-glutamyl-tRNA(Gln) + L-glutamine + ATP + H2O = L-glutaminyl-tRNA(Gln) + L-glutamate + ADP + phosphate + H(+). The enzyme catalyses L-aspartyl-tRNA(Asn) + L-glutamine + ATP + H2O = L-asparaginyl-tRNA(Asn) + L-glutamate + ADP + phosphate + 2 H(+). Allows the formation of correctly charged Asn-tRNA(Asn) or Gln-tRNA(Gln) through the transamidation of misacylated Asp-tRNA(Asn) or Glu-tRNA(Gln) in organisms which lack either or both of asparaginyl-tRNA or glutaminyl-tRNA synthetases. The reaction takes place in the presence of glutamine and ATP through an activated phospho-Asp-tRNA(Asn) or phospho-Glu-tRNA(Gln). The sequence is that of Aspartyl/glutamyl-tRNA(Asn/Gln) amidotransferase subunit B from Prochlorococcus marinus (strain MIT 9515).